A 159-amino-acid polypeptide reads, in one-letter code: Putative 4-hydroxy-4-methyl-2-oxoglutarate aldolase (159 aa).

Residues 74 to 77 (GDNL) and Arg96 each bind substrate. Position 97 (Asp97) interacts with a divalent metal cation.

Belongs to the class II aldolase/RraA-like family. As to quaternary structure, homotrimer. A divalent metal cation is required as a cofactor.

It catalyses the reaction 4-hydroxy-4-methyl-2-oxoglutarate = 2 pyruvate. The catalysed reaction is oxaloacetate + H(+) = pyruvate + CO2. Functionally, catalyzes the aldol cleavage of 4-hydroxy-4-methyl-2-oxoglutarate (HMG) into 2 molecules of pyruvate. Also contains a secondary oxaloacetate (OAA) decarboxylase activity due to the common pyruvate enolate transition state formed following C-C bond cleavage in the retro-aldol and decarboxylation reactions. The polypeptide is Putative 4-hydroxy-4-methyl-2-oxoglutarate aldolase (Bacillus cereus (strain ZK / E33L)).